A 172-amino-acid chain; its full sequence is Ribosome maturation factor RimM (172 aa).

Residues 96 to 168 (DGEFYYHEII…RIEVELMEGL (73 aa)) form the PRC barrel domain.

Belongs to the RimM family. In terms of assembly, binds ribosomal protein uS19.

It is found in the cytoplasm. Functionally, an accessory protein needed during the final step in the assembly of 30S ribosomal subunit, possibly for assembly of the head region. Essential for efficient processing of 16S rRNA. May be needed both before and after RbfA during the maturation of 16S rRNA. It has affinity for free ribosomal 30S subunits but not for 70S ribosomes. The protein is Ribosome maturation factor RimM of Streptococcus thermophilus (strain ATCC BAA-491 / LMD-9).